Here is a 1054-residue protein sequence, read N- to C-terminus: MTIIVASLFLPYTPQFEADVTNSDTAKLVESSMIKVDCNNQELSNNKQERSSSVTSASSHYIGLPQEAQINGEPLQRANVGSPATGVNYHNEMEMLSSEQFLEELTANATHAANSGIPPANNPVSSGSTAQRPSVEEFFSAPSARVCSPSQEASASSISASRSSAHHNDLSSSLMKNPNLSFDSHPPRVRSSSKSAVITPVSKSVPDVDPAVVDVAKVREEFQQQASLPSMKRVSGSTAGDSSIASSSSNLRYSQQFQDNFIEDTDSEDDIDSDLETDATKKYNVPKFGGYSNNAKLRASLMRNSYELFKHLPWTIVDSDKGNGSLKNAVNIAVAEKTVKEPVSWVGTMGIPTDELPHEVCHKISKKLEQDFSSFPVVTDDITFKGAYKNYAKQILWPTLHYQIPDNPNSKAFEDHSWDYYQKVNQKFSDRIVSVYKPGDTIWIHDYHLMLVPQMVREKLPKAKIGFFLHVSFPSSEVFRCLANRERILEGIIGANFVGFQTKEYKRHFLQTCNRLLAADVSNDEVKYHCNIVSVMYAPIGIDYYHLTSQLRNGSVLEWRQLIKERWRNKKLIVCRDQFDRIRGLQKKMLAYERFLIENPEYIEKVVLIQICIGKSSDPEYERQIMVVVDRINSLSSNISISQPVVFLHQDLDFAQYLALNCEADVFLVDALREGMNLTCHEFIVSSFEKNAPLLLSEFTGSSSVLKEGAILINPWDINHVAQSIKRSLEMSPEEKRRRWKKLFKSVIEHDSDNWITKCFEYINNAWESNQETSTVFNLAPEKFCADYKASKKHLFIFKISEPPTSRMLSLLSELSSNNIVYVLSSFTKNTFESLYNGVLNIGLIAENGAYVRVNGSWYNIVEELDWMKEVAKIFDEKVERLPGSYYKIADSMIRFHTENADDQDRVPTVIGEAITHINTLFDDRDIHAYVHKDIVFVQQTGLALAAAEFLMKFYNSGVSPTDNSRISLSRTSSSMSVGNNKKHFQNQVDFVCVSGSTSPIIEPLFKLVKQEVEKNNLKFGYTILYGSSRSTYAKEHINGVNELFTILHDLTAA.

The disordered stretch occupies residues 112–133 (AANSGIPPANNPVSSGSTAQRP). The segment covering 122 to 132 (NPVSSGSTAQR) has biased composition (polar residues). A phosphoserine mark is found at S148, S150, and S181. 2 disordered regions span residues 155–203 (ASSI…PVSK) and 223–250 (QQQASLPSMKRVSGSTAGDSSIASSSSN). The span at 170-182 (LSSSLMKNPNLSF) shows a compositional bias: polar residues. The span at 235 to 249 (SGSTAGDSSIASSSS) shows a compositional bias: low complexity. T265 is subject to Phosphothreonine. Phosphoserine occurs at positions 267 and 273. Residues 287–778 (KFGGYSNNAK…SNQETSTVFN (492 aa)) form a glycosyltransferase region. S960 bears the Phosphoserine mark.

It in the N-terminal section; belongs to the glycosyltransferase 20 family. The trehalose synthase complex is composed of the two catalytic subunits TPS1 and TPS2 and at least one of the two regulatory subunits TPS3 or TSL1.

The protein resides in the cytoplasm. Functionally, regulatory subunit of the trehalose synthase complex that catalyzes the production of trehalose from glucose-6-phosphate and UDP-glucose in a two step process. May stabilize the trehalose synthase complex. The protein is Trehalose synthase complex regulatory subunit TPS3 (TPS3) of Saccharomyces cerevisiae (strain ATCC 204508 / S288c) (Baker's yeast).